The sequence spans 577 residues: Zona pellucida sperm-binding protein 3 receptor (577 aa).

Positions 1–32 are cleaved as a signal peptide; that stretch reads MTAWSLHELWKTSHSTLFQVTLATVLMAPVLG. Sushi domains follow at residues 33–92, 93–154, 155–219, 220–279, 280–346, and 347–412; these read DCGP…FCAR, KRCK…ECVI, ATCE…ACEK, IVCH…TCEP, NGCI…GCER, and VCCP…SCEA. 12 disulfide bridges follow: C34-C78, C64-C90, C95-C136, C122-C152, C157-C200, C186-C217, C222-C264, C250-C277, C282-C332, C316-C344, C349-C397, and C382-C410. N72 and N81 each carry an N-linked (GlcNAc...) asparagine glycan. N-linked (GlcNAc...) asparagine glycosylation is found at N144, N195, and N204. N-linked (GlcNAc...) asparagine glycosylation occurs at N335. N-linked (GlcNAc...) asparagine glycosylation is found at N426, N431, N434, N443, N462, N475, and N497. In terms of domain architecture, Sushi 7 spans 451-509; it reads AVCPKPEIINGNLSVEKEIYAEMENITIQCDSGYDLVGSSNIICLENRTWYPDIPFCIM. Cystine bridges form between C453–C494 and C480–C507.

In terms of assembly, homomultimer; disulfide-linked. Post-translationally, glycosylated. As to expression, testis specific.

The protein resides in the cytoplasmic vesicle. The protein localises to the secretory vesicle. It localises to the acrosome lumen. Its function is as follows. Binds to ZP3 glycoprotein in egg zona pellucida. Probably involved in interactions between sperm acrosome and egg zona pellucida during and immediately following the acrosome reaction. This is Zona pellucida sperm-binding protein 3 receptor (Zp3r) from Rattus norvegicus (Rat).